We begin with the raw amino-acid sequence, 344 residues long: L-rhamnose-proton symporter (344 aa).

The next 10 membrane-spanning stretches (helical) occupy residues 4–24 (AITMGIFWHLIGAASAACFYA), 38–58 (WSVGGIVSWLILPWTISALLL), 68–88 (FNLSTLLPVFLFGAMWGIGNI), 101–121 (MGIGIAIGITLIVGTLMTPII), 137–157 (TLLGVFVALIGVGIVTRAGQL), 175–195 (LLLAVMCGIFSAGMSFAMNAA), 214–234 (LPSYVVIMGGGALVNLGFCFI), 259–279 (ILLSALGGLMWYLQFFFYAWG), 290–310 (MSWMLHMSFYVLCGGLVGLVL), and 321–341 (VAVLSLGCVVIIIAANIVGLG).

This sequence belongs to the L-rhamnose transporter (TC 2.A.7.6) family.

The protein resides in the cell inner membrane. It catalyses the reaction L-rhamnopyranose(in) + H(+)(in) = L-rhamnopyranose(out) + H(+)(out). Its function is as follows. Uptake of L-rhamnose across the cytoplasmic membrane with the concomitant transport of protons into the cell (symport system). This chain is L-rhamnose-proton symporter, found in Salmonella agona (strain SL483).